Consider the following 163-residue polypeptide: MKTKLITREGYNKLKQEHDYLWNEKRPEITKIVTWAASLGDRSENADYTFNKRLLRQIDRRVRFLRKFLPEVTIVDYSPQQEGKVFFGAWVEIENEAGDVKKFRIVGPEEIYGDAKDYISIDSPMARAMLKKQVDEEFTVRTPEGDKEWFINSIEYNKQSAES.

It belongs to the GreA/GreB family. GreB subfamily.

Functionally, necessary for efficient RNA polymerase transcription elongation past template-encoded arresting sites. The arresting sites in DNA have the property of trapping a certain fraction of elongating RNA polymerases that pass through, resulting in locked ternary complexes. Cleavage of the nascent transcript by cleavage factors such as GreA or GreB allows the resumption of elongation from the new 3'terminus. GreB releases sequences of up to 9 nucleotides in length. This is Transcription elongation factor GreB from Vibrio parahaemolyticus serotype O3:K6 (strain RIMD 2210633).